We begin with the raw amino-acid sequence, 112 residues long: Large ribosomal subunit protein P2 (112 aa).

The tract at residues 81-112 is disordered; it reads VETAEAKKEDKKEEKKEEEEEEEDDLGFSLFG. Over residues 84 to 95 the composition is skewed to basic and acidic residues; sequence AEAKKEDKKEEK. Positions 96 to 106 are enriched in acidic residues; that stretch reads KEEEEEEEDDL.

The protein belongs to the eukaryotic ribosomal protein P1/P2 family. In terms of assembly, P1 and P2 exist as dimers at the large ribosomal subunit. Phosphorylated.

In terms of biological role, plays an important role in the elongation step of protein synthesis. The polypeptide is Large ribosomal subunit protein P2 (MAL3P3.19) (Plasmodium falciparum (isolate 3D7)).